Reading from the N-terminus, the 295-residue chain is Diaminopimelate epimerase (295 aa).

Residues Asn-13 and Asn-69 each contribute to the substrate site. Catalysis depends on Cys-78, which acts as the Proton donor. Residues 79–80, Asn-173, Asn-212, and 230–231 contribute to the substrate site; these read GN and ER. Cys-239 functions as the Proton acceptor in the catalytic mechanism. A substrate-binding site is contributed by 240–241; the sequence is GT.

Belongs to the diaminopimelate epimerase family. As to quaternary structure, homodimer.

It localises to the cytoplasm. The enzyme catalyses (2S,6S)-2,6-diaminopimelate = meso-2,6-diaminopimelate. The protein operates within amino-acid biosynthesis; L-lysine biosynthesis via DAP pathway; DL-2,6-diaminopimelate from LL-2,6-diaminopimelate: step 1/1. Its function is as follows. Catalyzes the stereoinversion of LL-2,6-diaminopimelate (L,L-DAP) to meso-diaminopimelate (meso-DAP), a precursor of L-lysine. In Methanococcus aeolicus (strain ATCC BAA-1280 / DSM 17508 / OCM 812 / Nankai-3), this protein is Diaminopimelate epimerase.